The primary structure comprises 287 residues: Transmembrane protein 163 (287 aa).

Residues 1–63 are disordered; that stretch reads METAAGSERR…ESGQFSDGLE (63 aa). Over 1 to 86 the chain is Cytoplasmic; the sequence is METAAGSERR…HEAQNYRKKA (86 aa). Residues S11, S53, S55, and S59 each carry the phosphoserine modification. Residues 40-70 form a required for interaction with MCOLN1 region; that stretch reads EPPQPEEERQLRISESGQFSDGLEDRGLLES. The chain crosses the membrane as a helical span at residues 87–107; that stretch reads LWVSWFSIIVTLALAVAAFTV. Residues 108–114 are Extracellular-facing; sequence SVMRYSA. Residues 115–135 traverse the membrane as a helical segment; it reads SAFGFAFDAILDVLSSAIVLW. Over 136 to 148 the chain is Cytoplasmic; the sequence is RYSNAAAVHSAHR. Residues 149 to 169 form a helical membrane-spanning segment; sequence EYIACVILGVIFLLSSVCIVV. At 170–185 the chain is on the extracellular side; the sequence is KAIHDLSTKLLPEVDD. The chain crosses the membrane as a helical span at residues 186-206; the sequence is FLFSVSILSGILCSILAVLKF. The Cytoplasmic segment spans residues 207–215; it reads MLGKVLTSR. Residues 216–236 traverse the membrane as a helical segment; that stretch reads ALITDGFNSLVGGVMGFSILL. Topologically, residues 237-253 are extracellular; that stretch reads SAEVFKHNSAVWYLDGS. A helical membrane pass occupies residues 254–274; that stretch reads IGVLIGLTIFAYGVKLLIDMV. Topologically, residues 275–287 are cytoplasmic; that stretch reads PRVRQTRHYEMFE.

The protein belongs to the TMEM163 family. Homodimer. Interacts with MCOLN1/TRPML1. Interacts with SLC30A1, SLC30A2, SLC30A3 and SLC30A4.

The protein localises to the cytoplasmic vesicle. The protein resides in the secretory vesicle. It is found in the synaptic vesicle membrane. It localises to the early endosome membrane. Its subcellular location is the late endosome membrane. The protein localises to the lysosome membrane. The protein resides in the cell membrane. The enzyme catalyses Zn(2+)(in) = Zn(2+)(out). In terms of biological role, zinc ion transporter that mediates zinc efflux and plays a crucial role in intracellular zinc homeostasis. Binds the divalent cations Zn(2+), Ni(2+), and to a minor extent Cu(2+). Is a functional modulator of P2X purinoceptors, including P2RX1, P2RX3, P2RX4 and P2RX7. Plays a role in central nervous system development and is required for myelination, and survival and proliferation of oligodendrocytes. The polypeptide is Transmembrane protein 163 (TMEM163) (Bos taurus (Bovine)).